Consider the following 156-residue polypeptide: ATP synthase subunit b (156 aa).

The chain crosses the membrane as a helical span at residues 7–29 (LFAQMVVFLVLAWFTMKFVWPPL).

It belongs to the ATPase B chain family. As to quaternary structure, F-type ATPases have 2 components, F(1) - the catalytic core - and F(0) - the membrane proton channel. F(1) has five subunits: alpha(3), beta(3), gamma(1), delta(1), epsilon(1). F(0) has three main subunits: a(1), b(2) and c(10-14). The alpha and beta chains form an alternating ring which encloses part of the gamma chain. F(1) is attached to F(0) by a central stalk formed by the gamma and epsilon chains, while a peripheral stalk is formed by the delta and b chains.

The protein localises to the cell inner membrane. F(1)F(0) ATP synthase produces ATP from ADP in the presence of a proton or sodium gradient. F-type ATPases consist of two structural domains, F(1) containing the extramembraneous catalytic core and F(0) containing the membrane proton channel, linked together by a central stalk and a peripheral stalk. During catalysis, ATP synthesis in the catalytic domain of F(1) is coupled via a rotary mechanism of the central stalk subunits to proton translocation. Its function is as follows. Component of the F(0) channel, it forms part of the peripheral stalk, linking F(1) to F(0). The protein is ATP synthase subunit b of Burkholderia vietnamiensis (strain G4 / LMG 22486) (Burkholderia cepacia (strain R1808)).